Reading from the N-terminus, the 896-residue chain is Desmocollin-3 (896 aa).

The N-terminal stretch at 1 to 31 (MVVPEFRSPQCRALCTKLLLTLWVFSFVGEA) is a signal peptide. Residues 32–135 (CKKVTFHVPS…KETVLRRSKR (104 aa)) constitute a propeptide that is removed on maturation. Cadherin domains lie at 136-243 (RWAP…YPLF), 244-355 (TEAI…APTF), 356-472 (RQNT…GPEC), 473-580 (KPPE…EIIQ), and 581-691 (DYIV…TLGK). Residues 136–695 (RWAPIPCSMQ…GITLGKWAIL (560 aa)) lie on the Extracellular side of the membrane. Asparagine 166 carries an N-linked (GlcNAc...) asparagine glycan. N-linked (GlcNAc...) asparagine glycosylation is found at asparagine 392 and asparagine 547. N-linked (GlcNAc...) (high mannose) asparagine glycosylation occurs at asparagine 630. The helical transmembrane segment at 696–716 (AILLGIALLFSVLLTLVCGVV) threads the bilayer. At 717–896 (TARKGKHFPE…LTLAETCTKR (180 aa)) the chain is on the cytoplasmic side.

May form homodimers. Interacts with DSG1; there is evidence to suggest that the interaction promotes cell-cell adhesion of keratinocytes. In terms of tissue distribution, expressed in the basal layers of epidermal stratified epithelia from birth (at protein level).

The protein localises to the cell membrane. It localises to the cell junction. Its subcellular location is the desmosome. The protein resides in the cytoplasm. In terms of biological role, a component of desmosome cell-cell junctions which are required for positive regulation of cellular adhesion. Required for cell-cell adhesion in the epidermis, as a result required for the maintenance of the dermal cohesion and the dermal barrier function. Required for cell-cell adhesion of epithelial cell layers surrounding the telogen hair club, as a result plays an important role in telogen hair shaft anchorage. Essential for successful completion of embryo compaction and development beyond the 8-cell stage. The chain is Desmocollin-3 (Dsc3) from Mus musculus (Mouse).